A 351-amino-acid chain; its full sequence is MKALAKLKKQPGIWMINDAPIPEYGYNDVLIKIKKTAICGTDLHIYNWDKWSQNTIPVPMITGHEFAGEVVAKGDGVTSVDIGDRVSGEGHLVCGQCRNCRAGKRHLCRKTIGIGVNVQGAFAEYLVMPAVNVFKIPDSISDDIASTFDPMGNAIHTALSFNLTGEDVLITGAGPIGLMAVKIARFCGARRIVITDINEYRLQMARDFGATVALNVAPFKNQDELVKQMRKVMSDIGMTEGFDVGLEMSGINSAISMMLDVMNHGGKLSLLGISAGDISVDWGAILFKGLTLKGIYGREMFETWYLMTSMLQAGMDMNPIITHRLHIDEFQKGFEIMKSGQCGKVILDWSS.

Cys39 is a Zn(2+) binding site. Catalysis depends on charge relay system residues Thr41 and His44. Zn(2+)-binding residues include His64, Glu65, Cys94, Cys97, Cys100, and Cys108. NAD(+)-binding positions include Ile176, Asp196, Arg201, 271 to 273 (LGI), and 295 to 296 (IY).

It belongs to the zinc-containing alcohol dehydrogenase family. In terms of assembly, homotetramer. The cofactor is Zn(2+).

It localises to the cytoplasm. It catalyses the reaction L-threonine + NAD(+) = (2S)-2-amino-3-oxobutanoate + NADH + H(+). Its pathway is amino-acid degradation; L-threonine degradation via oxydo-reductase pathway; glycine from L-threonine: step 1/2. Catalyzes the NAD(+)-dependent oxidation of L-threonine to 2-amino-3-ketobutyrate. This Francisella tularensis subsp. holarctica (strain OSU18) protein is L-threonine 3-dehydrogenase.